A 281-amino-acid polypeptide reads, in one-letter code: MSRHVAIVTDSTAYLPARAMERHGITAVPLTVVLGDRALEEGTEISTRSLAQALQKRRPVTTSRPNPELFAETYRRIAESGADGIVSLHLSAELSGTHDAAVVAAREAPVPVRVVDTGMIAMALGFCALAAAETAEAGGTVDEAVTAAEKRAAGTSAYFYVDTLDYLRRGGRIGAAQALFGSALAVKPLLQLEGGRIEPLEKVRTASKAIARLEEIAADRAGGAPVDIAVHHLAAPDRASALADRLRDRVPGLADLHVSEVGAVIGAHTGPGLLGVVVSSR.

Positions 5-280 (VAIVTDSTAY…PGLLGVVVSS (276 aa)) constitute a DegV domain. Thr-62 and Ser-95 together coordinate hexadecanoate.

May bind long-chain fatty acids, such as palmitate, and may play a role in lipid transport or fatty acid metabolism. This Streptomyces coelicolor (strain ATCC BAA-471 / A3(2) / M145) protein is DegV domain-containing protein SCO2569.